A 205-amino-acid polypeptide reads, in one-letter code: MGKPLYLVKFIIIGSQSVGKSCLLFRFIDNKFKSQSTHTIGVDFSSRVVDIQGKNVKLQIWDTAGQERFRSVVISYYRGSAGVALVYDVTNRESYNHITNWLSDVKSLASPDVTIILVGNKADLTEQREVTFLEASRIAQENGLLFMETSALTGEGVEEMFLKCTRTIMTKIDSGEVNLEHLGVQISSDSGNVTKKPGDSSNCSC.

14-22 (GSQSVGKSC) provides a ligand contact to GTP. Residues 36–44 (STHTIGVDF) carry the Effector region motif. Residues 62-66 (DTAGQ), 120-123 (NKAD), and 150-152 (SAL) contribute to the GTP site. 2 S-geranylgeranyl cysteine lipidation sites follow: Cys203 and Cys205. A Cysteine methyl ester modification is found at Cys205.

Belongs to the small GTPase superfamily. Rab family.

The protein resides in the cell membrane. Functionally, protein transport. Probably involved in vesicular traffic. The sequence is that of Ras-related protein Rab-4 (rab4) from Dictyostelium discoideum (Social amoeba).